The primary structure comprises 540 residues: Mitochondrial distribution and morphology protein 34 (540 aa).

An SMP-LTD domain is found at 1–208; that stretch reads MSFKFNSGTF…LPSVIFNMSQ (208 aa). Disordered stretches follow at residues 26-51 and 379-399; these read ALNP…KKPK and RSKS…SGSL. A compositionally biased stretch (polar residues) spans 35–44; that stretch reads PESTSGQDGS.

It belongs to the MDM34 family. As to quaternary structure, component of the ER-mitochondria encounter structure (ERMES) or MDM complex, composed of MMM1, MDM10, MDM12 and MDM34.

It localises to the mitochondrion outer membrane. In terms of biological role, component of the ERMES/MDM complex, which serves as a molecular tether to connect the endoplasmic reticulum (ER) and mitochondria. Components of this complex are involved in the control of mitochondrial shape and protein biogenesis, and function in nonvesicular lipid trafficking between the ER and mitochondria. MDM34 is required for the interaction of the ER-resident membrane protein MMM1 and the outer mitochondrial membrane-resident beta-barrel protein MDM10. The protein is Mitochondrial distribution and morphology protein 34 of Kluyveromyces lactis (strain ATCC 8585 / CBS 2359 / DSM 70799 / NBRC 1267 / NRRL Y-1140 / WM37) (Yeast).